The chain runs to 111 residues: Large ribosomal subunit protein uL23 (111 aa).

It belongs to the universal ribosomal protein uL23 family. Part of the 50S ribosomal subunit. Contacts protein L29, and trigger factor when it is bound to the ribosome.

Its function is as follows. One of the early assembly proteins it binds 23S rRNA. One of the proteins that surrounds the polypeptide exit tunnel on the outside of the ribosome. Forms the main docking site for trigger factor binding to the ribosome. This chain is Large ribosomal subunit protein uL23, found in Chlamydia trachomatis serovar L2 (strain ATCC VR-902B / DSM 19102 / 434/Bu).